The following is a 243-amino-acid chain: Small ribosomal subunit protein eS4 (243 aa).

One can recognise an S4 RNA-binding domain in the interval 43-105 (IPLIYIVRDY…TGEHYRVLPN (63 aa)).

It belongs to the eukaryotic ribosomal protein eS4 family. Part of the 30S ribosomal subunit.

The protein is Small ribosomal subunit protein eS4 of Thermococcus kodakarensis (strain ATCC BAA-918 / JCM 12380 / KOD1) (Pyrococcus kodakaraensis (strain KOD1)).